Consider the following 241-residue polypeptide: Uridylate kinase (241 aa).

13 to 16 is a binding site for ATP; the sequence is KVSG. Residue Gly55 coordinates UMP. The ATP site is built by Gly56 and Arg60. Residues Asp75 and 136–143 contribute to the UMP site; that span reads TGNPFFTT. Residues Thr163, Gln164, Tyr169, and Asp172 each contribute to the ATP site.

The protein belongs to the UMP kinase family. Homohexamer.

The protein localises to the cytoplasm. The catalysed reaction is UMP + ATP = UDP + ADP. The protein operates within pyrimidine metabolism; CTP biosynthesis via de novo pathway; UDP from UMP (UMPK route): step 1/1. With respect to regulation, inhibited by UTP. Its function is as follows. Catalyzes the reversible phosphorylation of UMP to UDP. The protein is Uridylate kinase of Parvibaculum lavamentivorans (strain DS-1 / DSM 13023 / NCIMB 13966).